Reading from the N-terminus, the 599-residue chain is UvrABC system protein C (599 aa).

Positions 15 to 93 (PCPGVYRMLD…IKALQPRYNV (79 aa)) constitute a GIY-YIG domain. A UVR domain is found at 202–237 (QQVINELVIRMEEASGQLAFEQAAYYRDRIASLRQI).

It belongs to the UvrC family. Interacts with UvrB in an incision complex.

Its subcellular location is the cytoplasm. Functionally, the UvrABC repair system catalyzes the recognition and processing of DNA lesions. UvrC both incises the 5' and 3' sides of the lesion. The N-terminal half is responsible for the 3' incision and the C-terminal half is responsible for the 5' incision. The chain is UvrABC system protein C from Nitrosococcus oceani (strain ATCC 19707 / BCRC 17464 / JCM 30415 / NCIMB 11848 / C-107).